We begin with the raw amino-acid sequence, 468 residues long: Putative BTB/POZ domain and WD-repeat protein R154 (468 aa).

The BTB domain maps to 14 to 85 (SDLQLIVEDS…FYGIDDKLPE (72 aa)). WD repeat units follow at residues 194–233 (HHSE…IIFN), 354–398 (DEIG…LVKS), and 401–440 (LFDV…IIYT).

This sequence belongs to the mimivirus BTB/WD family.

The chain is Putative BTB/POZ domain and WD-repeat protein R154 from Acanthamoeba polyphaga (Amoeba).